We begin with the raw amino-acid sequence, 381 residues long: Probable tRNA sulfurtransferase (381 aa).

The THUMP domain occupies 68–176 (DLALKLLKKV…NDGAYIFTEK (109 aa)). ATP contacts are provided by residues 194–195 (LI), K276, G298, and Q307.

The protein belongs to the ThiI family.

It localises to the cytoplasm. It carries out the reaction [ThiI sulfur-carrier protein]-S-sulfanyl-L-cysteine + a uridine in tRNA + 2 reduced [2Fe-2S]-[ferredoxin] + ATP + H(+) = [ThiI sulfur-carrier protein]-L-cysteine + a 4-thiouridine in tRNA + 2 oxidized [2Fe-2S]-[ferredoxin] + AMP + diphosphate. The catalysed reaction is [ThiS sulfur-carrier protein]-C-terminal Gly-Gly-AMP + S-sulfanyl-L-cysteinyl-[cysteine desulfurase] + AH2 = [ThiS sulfur-carrier protein]-C-terminal-Gly-aminoethanethioate + L-cysteinyl-[cysteine desulfurase] + A + AMP + 2 H(+). Its pathway is cofactor biosynthesis; thiamine diphosphate biosynthesis. Catalyzes the ATP-dependent transfer of a sulfur to tRNA to produce 4-thiouridine in position 8 of tRNAs, which functions as a near-UV photosensor. Also catalyzes the transfer of sulfur to the sulfur carrier protein ThiS, forming ThiS-thiocarboxylate. This is a step in the synthesis of thiazole, in the thiamine biosynthesis pathway. The sulfur is donated as persulfide by IscS. In Methanocaldococcus jannaschii (strain ATCC 43067 / DSM 2661 / JAL-1 / JCM 10045 / NBRC 100440) (Methanococcus jannaschii), this protein is Probable tRNA sulfurtransferase.